We begin with the raw amino-acid sequence, 143 residues long: Large ribosomal subunit protein uL15 (143 aa).

A disordered region spans residues Met1–Gly52. Positions Arg21–Ser31 are enriched in gly residues.

Belongs to the universal ribosomal protein uL15 family. As to quaternary structure, part of the 50S ribosomal subunit.

Functionally, binds to the 23S rRNA. The protein is Large ribosomal subunit protein uL15 of Francisella tularensis subsp. tularensis (strain FSC 198).